A 147-amino-acid chain; its full sequence is uncharacterized protein (147 aa).

In terms of domain architecture, N-acetyltransferase spans 7-147; that stretch reads LEINYKTDEL…GHDVLVWAPK (141 aa).

This is an uncharacterized protein from Staphylococcus haemolyticus (strain JCSC1435).